We begin with the raw amino-acid sequence, 807 residues long: Glycerol-3-phosphate acyltransferase (807 aa).

The HXXXXD motif motif lies at 309–314 (CHRSHM).

The protein belongs to the GPAT/DAPAT family.

It is found in the cell inner membrane. The enzyme catalyses sn-glycerol 3-phosphate + an acyl-CoA = a 1-acyl-sn-glycero-3-phosphate + CoA. It participates in phospholipid metabolism; CDP-diacylglycerol biosynthesis; CDP-diacylglycerol from sn-glycerol 3-phosphate: step 1/3. In Aeromonas hydrophila subsp. hydrophila (strain ATCC 7966 / DSM 30187 / BCRC 13018 / CCUG 14551 / JCM 1027 / KCTC 2358 / NCIMB 9240 / NCTC 8049), this protein is Glycerol-3-phosphate acyltransferase.